Here is a 232-residue protein sequence, read N- to C-terminus: Zinc-finger homeodomain protein 5 (232 aa).

Residues 1–11 show a composition bias toward acidic residues; sequence MELSEHEEDAG. The disordered stretch occupies residues 1-25; it reads MELSEHEEDAGDVGGGCSSPPTPPH. The ZF-HD dimerization-type; degenerate zinc-finger motif lies at 40–86; sequence YHECLRNHAAASGGHVVDGCGEFMPASTEEPLACAACGCHRSFHRRD. The segment at 126–170 is disordered; that stretch reads GLPFPGYGTPSGGTGTTTASSSDERLRPSPVQPRRRSRTTFTREQ. The homeobox DNA-binding region spans 159-222; the sequence is RRRSRTTFTR…NNKHSFKQKQ (64 aa).

Homo- and heterodimer with other ZFHD proteins.

The protein resides in the nucleus. Functionally, putative transcription factor. The sequence is that of Zinc-finger homeodomain protein 5 (ZHD5) from Oryza sativa subsp. indica (Rice).